Reading from the N-terminus, the 641-residue chain is WW domain-binding protein 11 (641 aa).

Polar residues predominate over residues 1–11 (MGRRSTSSTKS). The interval 1-37 (MGRRSTSSTKSGKFMNPTDQARKEARKRELKKNKKQR) is disordered. Residues 1–45 (MGRRSTSSTKSGKFMNPTDQARKEARKRELKKNKKQRMMVRAAVL) form a required for nuclear import region. An N6-acetyllysine modification is found at Lys13. Residues 28-37 (RELKKNKKQR) are compositionally biased toward basic residues. Positions 75–133 (EKVLKDKRKKLRETFERILRLYEKENPDIYKELRKLEVEYEQKRAQLSQYFDAVKNAQH) form a coiled coil. Ser181 carries the post-translational modification Phosphoserine. The tract at residues 188–213 (HGVPRLPPGRKPPGPPPGPPPPQVLQ) is disordered. Omega-N-methylarginine is present on Arg192. Over residues 192–210 (RLPPGRKPPGPPPGPPPPQ) the composition is skewed to pro residues. The tract at residues 217–221 (RKVGF) is interaction with PP1. Tyr236 is modified (phosphotyrosine). The segment at 236–550 (YSPELAQRGH…IQRPKADDAS (315 aa)) is disordered. Ser237 bears the Phosphoserine mark. A compositionally biased stretch (acidic residues) spans 253-263 (SEDDGYPEDMD). Residues 276–304 (TDRSDAESDGDEFGHREDSERDNTEEKKS) show a composition bias toward basic and acidic residues. 2 positions are modified to phosphoserine: Ser279 and Ser283. Residues 306 to 310 (LSVRF) form an interaction with PP1 region. The segment covering 351-365 (EFSEEEDADDSDDSE) has biased composition (acidic residues). Ser353, Ser361, and Ser364 each carry phosphoserine. Over residues 366–380 (AEKQSQKQHKDDGHS) the composition is skewed to basic and acidic residues. Residues 381–404 (DSTAAASSQQQAPPQSAPASQIQA) show a composition bias toward low complexity. Composition is skewed to pro residues over residues 405 to 447 (PPMP…PPGM), 456 to 504 (RLLP…PPRP), and 510 to 530 (PLVP…PLPN). Residues 455-466 (PRLLPPGPPPGR) carry the PGR motif. Lys557 is covalently cross-linked (Glycyl lysine isopeptide (Lys-Gly) (interchain with G-Cter in SUMO2)). N6-acetyllysine is present on Lys565. Lys572 is covalently cross-linked (Glycyl lysine isopeptide (Lys-Gly) (interchain with G-Cter in SUMO2)). Residues 588–620 (ENKGATAVPQRRSEDDSAVPVAKAAPRSGPSVA) form a disordered region. Position 600 is a phosphoserine (Ser600). Residues 633–641 (FMKEMEGLL) are required for nuclear export.

As to quaternary structure, interacts via the PGR motif with PQBP1 in the nucleus. Interacts with the WW domains of WBP4. Interacts with PPP1CA, PPP1CB and PPP1CC. As to expression, ubiquitously expressed, with highest levels in testis.

Its subcellular location is the nucleus. The protein localises to the cytoplasm. Functionally, activates pre-mRNA splicing. May inhibit PP1 phosphatase activity. This Mus musculus (Mouse) protein is WW domain-binding protein 11 (Wbp11).